Consider the following 407-residue polypeptide: Tyrosine--tRNA ligase (407 aa).

L-tyrosine is bound at residue tyrosine 35. The 'HIGH' region motif lies at 40–49; it reads PTADSLHVGH. Residues tyrosine 168 and glutamine 172 each coordinate L-tyrosine. A 'KMSKS' region motif is present at residues 228 to 232; it reads KMGKT. Position 231 (lysine 231) interacts with ATP. The S4 RNA-binding domain maps to 341–405; it reads NLLVDLLVKC…RGKKNFNRIV (65 aa).

This sequence belongs to the class-I aminoacyl-tRNA synthetase family. TyrS type 1 subfamily. Homodimer.

It is found in the cytoplasm. The catalysed reaction is tRNA(Tyr) + L-tyrosine + ATP = L-tyrosyl-tRNA(Tyr) + AMP + diphosphate + H(+). In terms of biological role, catalyzes the attachment of tyrosine to tRNA(Tyr) in a two-step reaction: tyrosine is first activated by ATP to form Tyr-AMP and then transferred to the acceptor end of tRNA(Tyr). The polypeptide is Tyrosine--tRNA ligase (Clostridium botulinum (strain Kyoto / Type A2)).